A 443-amino-acid polypeptide reads, in one-letter code: Large ribosomal subunit protein mL50 (443 aa).

The interval 121 to 145 is disordered; it reads QPTRADAPEKIRDPNYEPATSGAGL. Over residues 126–135 the composition is skewed to basic and acidic residues; sequence DAPEKIRDPN.

This sequence belongs to the mitochondrion-specific ribosomal protein mL50 family. Component of the mitochondrial large ribosomal subunit (mt-LSU). Mature N.crassa 74S mitochondrial ribosomes consist of a small (37S) and a large (54S) subunit. The 37S small subunit contains a 16S ribosomal RNA (16S mt-rRNA) and 32 different proteins. The 54S large subunit contains a 23S rRNA (23S mt-rRNA) and 42 different proteins.

Its subcellular location is the mitochondrion. Functionally, component of the mitochondrial ribosome (mitoribosome), a dedicated translation machinery responsible for the synthesis of mitochondrial genome-encoded proteins, including at least some of the essential transmembrane subunits of the mitochondrial respiratory chain. The mitoribosomes are attached to the mitochondrial inner membrane and translation products are cotranslationally integrated into the membrane. The protein is Large ribosomal subunit protein mL50 (mrpl13) of Neurospora crassa (strain ATCC 24698 / 74-OR23-1A / CBS 708.71 / DSM 1257 / FGSC 987).